The primary structure comprises 537 residues: Cytochrome P450 734A5 (537 aa).

A helical membrane pass occupies residues 13 to 33; that stretch reads GAAAVAVAAAAAWVAVYAAAA. Residue Cys480 participates in heme binding.

The protein belongs to the cytochrome P450 family. It depends on heme as a cofactor. In terms of tissue distribution, exclusively expressed in roots.

Its subcellular location is the membrane. Functionally, cytochrome P450 probably involved in brassinosteroids (BRs) inactivation and regulation of BRs homeostasis. This chain is Cytochrome P450 734A5 (CYP734A5), found in Oryza sativa subsp. japonica (Rice).